The following is a 312-amino-acid chain: Ribosomal protein L11 methyltransferase (312 aa).

S-adenosyl-L-methionine is bound by residues Thr-160, Gly-181, Asp-203, and Asn-246.

This sequence belongs to the methyltransferase superfamily. PrmA family.

The protein resides in the cytoplasm. It catalyses the reaction L-lysyl-[protein] + 3 S-adenosyl-L-methionine = N(6),N(6),N(6)-trimethyl-L-lysyl-[protein] + 3 S-adenosyl-L-homocysteine + 3 H(+). Its function is as follows. Methylates ribosomal protein L11. This chain is Ribosomal protein L11 methyltransferase, found in Staphylococcus aureus (strain bovine RF122 / ET3-1).